Consider the following 416-residue polypeptide: Calreticulin (416 aa).

An N-terminal signal peptide occupies residues 1 to 17; the sequence is MLLSVPLLLGLLGLAAA. An N-domain region spans residues 18–197; the sequence is DPAIYFKEQF…NSQVESGSLE (180 aa). A Ca(2+)-binding site is contributed by Gln26. Position 48 is an N6-acetyllysine (Lys48). Residues Lys62 and Lys64 each contribute to the Ca(2+) site. Residue Lys64 is modified to N6-(2-hydroxyisobutyryl)lysine. Cysteines 105 and 137 form a disulfide. An alpha-D-glucoside is bound by residues Tyr109, Lys111, Tyr128, and Asp135. Lys159 bears the N6-acetyllysine mark. A 1-1 repeat occupies 191–202; that stretch reads VESGSLEDDWDF. The interval 191–255 is 4 X approximate repeats; the sequence is VESGSLEDDW…DAKKPEDWDE (65 aa). A disordered region spans residues 193–277; that stretch reads SGSLEDDWDF…NPEYKGEWKP (85 aa). The tract at residues 198–308 is P-domain; sequence DDWDFLPPKK…YSPDANIYAY (111 aa). Residues 207 to 251 are compositionally biased toward basic and acidic residues; the sequence is KIKDPDAAKPEDWDERAKIDDPTDSKPEDWDKPEHIPDPDAKKPE. Lys209 bears the N6-acetyllysine mark. Repeat copies occupy residues 210-221, 227-238, 244-255, 259-269, 273-283, and 287-297. The segment at 237 to 270 is interaction with PPIB; sequence DKPEHIPDPDAKKPEDWDEEMDGEWEPPVIQNPE. Residues 252–261 show a composition bias toward acidic residues; sequence DWDEEMDGEW. The tract at residues 259–297 is 3 X approximate repeats; the sequence is GEWEPPVIQNPEYKGEWKPRQIDNPDYKGTWIHPEIDNP. The segment at 309–416 is C-domain; that stretch reads DSFAVLGLDL…ESPGQAKDEL (108 aa). Asp317 lines the an alpha-D-glucoside pocket. Ca(2+) is bound at residue Asp328. The segment at 350–416 is disordered; sequence TKAAEKQMKD…ESPGQAKDEL (67 aa). Over residues 352–379 the composition is skewed to basic and acidic residues; the sequence is AAEKQMKDKQDEEQRLKEEEEDKKRKEE. Residues 380 to 408 show a composition bias toward acidic residues; it reads EEAEDKEDDDDRDEDEDEEDEKEEDEEES. The Prevents secretion from ER signature appears at 413–416; that stretch reads KDEL.

The protein belongs to the calreticulin family. As to quaternary structure, monomer. Interacts with GABARAP, NR3C1, PDIA3/ERp57 and TRIM21. Interacts (via P-domain) with PDIA5. Interacts with PPIB. Interacts with SPACA9. Component of an EIF2 complex at least composed of CELF1/CUGBP1, CALR, CALR3, EIF2S1, EIF2S2, HSP90B1 and HSPA5. Interacts with CLCC1.

The protein resides in the endoplasmic reticulum lumen. Its subcellular location is the cytoplasm. It localises to the cytosol. The protein localises to the cytolytic granule. It is found in the secreted. The protein resides in the extracellular space. Its subcellular location is the extracellular matrix. It localises to the cell surface. The protein localises to the sarcoplasmic reticulum lumen. It is found in the cytoplasmic vesicle. The protein resides in the secretory vesicle. Its subcellular location is the cortical granule. Calcium-binding chaperone that promotes folding, oligomeric assembly and quality control in the endoplasmic reticulum (ER) via the calreticulin/calnexin cycle. This lectin interacts transiently with almost all of the monoglucosylated glycoproteins that are synthesized in the ER. Interacts with the DNA-binding domain of NR3C1 and mediates its nuclear export. Involved in maternal gene expression regulation. May participate in oocyte maturation via the regulation of calcium homeostasis. Present in the cortical granules of non-activated oocytes, is exocytosed during the cortical reaction in response to oocyte activation and might participate in the block to polyspermy. This is Calreticulin (Calr) from Mus musculus (Mouse).